The primary structure comprises 109 residues: C-X-C motif chemokine 13 (109 aa).

An N-terminal signal peptide occupies residues 1-22; it reads MKFISTSLLLMLLVSSLSPVQG. 2 disulfide bridges follow: C33/C60 and C35/C76.

This sequence belongs to the intercrine alpha (chemokine CxC) family. In terms of tissue distribution, highest levels in liver, followed by spleen, lymph node, appendix and stomach. Low levels in salivary gland, mammary gland and fetal spleen.

It localises to the secreted. Chemotactic for B-lymphocytes but not for T-lymphocytes, monocytes and neutrophils. Does not induce calcium release in B-lymphocytes. Binds to BLR1/CXCR5. The chain is C-X-C motif chemokine 13 (CXCL13) from Homo sapiens (Human).